A 70-amino-acid polypeptide reads, in one-letter code: Basic phospholipase A2 2 (70 aa).

Cys-28 and Cys-44 are disulfide-bonded. His-47 is an active-site residue. Asp-48 lines the Ca(2+) pocket.

It belongs to the phospholipase A2 family. Group II subfamily. D49 sub-subfamily. Ca(2+) serves as cofactor. In terms of tissue distribution, expressed by the venom gland.

The protein localises to the secreted. The enzyme catalyses a 1,2-diacyl-sn-glycero-3-phosphocholine + H2O = a 1-acyl-sn-glycero-3-phosphocholine + a fatty acid + H(+). Snake venom phospholipase A2 (PLA2) that exhibits strong myotoxicity. PLA2 catalyzes the calcium-dependent hydrolysis of the 2-acyl groups in 3-sn-phosphoglycerides. This is Basic phospholipase A2 2 from Trimeresurus stejnegeri (Chinese green tree viper).